The chain runs to 1097 residues: Importin-5 (1097 aa).

Ala2 is subject to N-acetylalanine. HEAT repeat units follow at residues 5-38 (AAEQQQFYLLLGNLLSPDNVVRKQAEETYENIPG), 43-77 (TFLLQAIRNTTAAEEARQMAAVLLRRLLSSAFDEV), 95-122 (MIIQMETQSSMRKKVCDIAAELARNLID), 130-157 (PEGLKFLFDSVSSQNVGLREAALHIFWN), 167-201 (QHYLDVIKRMLVQCMQDQEHPSIRTLSARATAAFI), 210-246 (LFKHFADLLPGFLQAVNDSCYQNDDSVLKSLVEIADT), 254-289 (HLEATLQLSLKLCGDTSLNNMQRQLALEVIVTLSET), 298-350 (TNIV…ACGL), 352-386 (GKLVLPMIKEHIMQMLQNPDWKYRHAGLMALSAIG), 390-430 (HQQM…ATDF), 432-472 (PGFQ…FTED), 475-523 (KSLL…ADTA), 525-568 (EKFV…GLAV), 570-615 (KEKF…CKIL), 617-692 (KEFQ…AKEL), 695-737 (GFVE…ARVR), 741-780 (YLTQMWHFMCDALIKAIGTEPDSDVLSEIMHSFAKCIEVM), 787-853 (NEHF…FSSY), 856-895 (KVLPWFEQLLPLIVNLICPHRPWPDRQWGLCIFDDVIEHC), 903-935 (AEYFLRPMLQYVCDNSPEVRQAAAYGLGVMAQY), 943-983 (FCTE…MKFK), 990-1021 (EEVLPHWLSWLPLHEDKEEAVQTFNYLCDLIE), 1032-1067 (NTNLPKIFSIIAEGEMHEAIKHEDPCAKRLANVVRQ), and 1070-1093 (TSGGLWTECIAQLSPEQQAAIQEL). An Importin N-terminal domain is found at 28–99 (QAEETYENIP…KSELLMIIQM (72 aa)). Residues 325-375 (DELEDDDFDSNAVAGESALDRMACGLGGKLVLPMIKEHIMQMLQNPDWKYR) are ran-GTP binding. Ser827 bears the Phosphoserine mark.

The protein belongs to the importin beta family. Importin beta-3 subfamily. In terms of assembly, interacts with RPS7 and RPL5. Interacts with RPL23A (via BIB domain). Interacts with H2A, H2B, H3 and H4 histones. Interacts with CPEB3; this mediates CPEB3 nuclear import following neuronal stimulation which enhances the interaction in a RAN-regulated manner. Interacts with AIFM2; this interaction likely mediates the translocation of AIFM2 into the nucleus upon oxidative stress. Interacts with STX3 (isoform 3). Interacts with SRP19. As to quaternary structure, (Microbial infection) Interacts with HIV-1 Rev.

The protein localises to the cytoplasm. It localises to the nucleus. It is found in the nucleolus. Functions in nuclear protein import as nuclear transport receptor. Serves as receptor for nuclear localization signals (NLS) in cargo substrates. Is thought to mediate docking of the importin/substrate complex to the nuclear pore complex (NPC) through binding to nucleoporin and the complex is subsequently translocated through the pore by an energy requiring, Ran-dependent mechanism. At the nucleoplasmic side of the NPC, Ran binds to the importin, the importin/substrate complex dissociates and importin is re-exported from the nucleus to the cytoplasm where GTP hydrolysis releases Ran. The directionality of nuclear import is thought to be conferred by an asymmetric distribution of the GTP- and GDP-bound forms of Ran between the cytoplasm and nucleus. Mediates the nuclear import of ribosomal proteins RPL23A, RPS7 and RPL5. In vitro, mediates nuclear import of H2A, H2B, H3 and H4 histones. Binds to CPEB3 and mediates its nuclear import following neuronal stimulation. In case of HIV-1 infection, binds and mediates the nuclear import of HIV-1 Rev. This Homo sapiens (Human) protein is Importin-5 (IPO5).